Here is a 510-residue protein sequence, read N- to C-terminus: Lysine--tRNA ligase (510 aa).

Residues Glu420 and Glu427 each coordinate Mg(2+).

The protein belongs to the class-II aminoacyl-tRNA synthetase family. Homodimer. It depends on Mg(2+) as a cofactor.

The protein resides in the cytoplasm. It catalyses the reaction tRNA(Lys) + L-lysine + ATP = L-lysyl-tRNA(Lys) + AMP + diphosphate. This chain is Lysine--tRNA ligase, found in Vibrio vulnificus (strain CMCP6).